A 348-amino-acid chain; its full sequence is UDP-3-O-acylglucosamine N-acyltransferase (348 aa).

Residue H241 is the Proton acceptor of the active site.

This sequence belongs to the transferase hexapeptide repeat family. LpxD subfamily. Homotrimer.

It carries out the reaction a UDP-3-O-[(3R)-3-hydroxyacyl]-alpha-D-glucosamine + a (3R)-hydroxyacyl-[ACP] = a UDP-2-N,3-O-bis[(3R)-3-hydroxyacyl]-alpha-D-glucosamine + holo-[ACP] + H(+). It participates in bacterial outer membrane biogenesis; LPS lipid A biosynthesis. In terms of biological role, catalyzes the N-acylation of UDP-3-O-acylglucosamine using 3-hydroxyacyl-ACP as the acyl donor. Is involved in the biosynthesis of lipid A, a phosphorylated glycolipid that anchors the lipopolysaccharide to the outer membrane of the cell. This is UDP-3-O-acylglucosamine N-acyltransferase from Neisseria meningitidis serogroup C / serotype 2a (strain ATCC 700532 / DSM 15464 / FAM18).